We begin with the raw amino-acid sequence, 62 residues long: uncharacterized protein (62 aa).

A helical transmembrane segment spans residues 37-57 (FILGVILLGVIIESITLLVVY).

The protein resides in the membrane. This is an uncharacterized protein from Dictyostelium discoideum (Social amoeba).